The sequence spans 388 residues: Chorismate synthase (388 aa).

Residues Arg39 and Arg45 each contribute to the NADP(+) site. FMN contacts are provided by residues 132-134, 251-252, Gly296, 311-315, and Arg337; these read RSS, NA, and KPIPT.

The protein belongs to the chorismate synthase family. In terms of assembly, homotetramer. FMNH2 serves as cofactor.

It carries out the reaction 5-O-(1-carboxyvinyl)-3-phosphoshikimate = chorismate + phosphate. Its pathway is metabolic intermediate biosynthesis; chorismate biosynthesis; chorismate from D-erythrose 4-phosphate and phosphoenolpyruvate: step 7/7. Catalyzes the anti-1,4-elimination of the C-3 phosphate and the C-6 proR hydrogen from 5-enolpyruvylshikimate-3-phosphate (EPSP) to yield chorismate, which is the branch point compound that serves as the starting substrate for the three terminal pathways of aromatic amino acid biosynthesis. This reaction introduces a second double bond into the aromatic ring system. The sequence is that of Chorismate synthase from Staphylococcus aureus (strain COL).